The sequence spans 376 residues: CC-adding tRNA nucleotidyltransferase (376 aa).

26–29 is a binding site for CTP; sequence GAVR. Positions 39 and 41 each coordinate Mg(2+). CTP-binding positions include 94–95, asparagine 99, 136–145, and arginine 176; these read RD and DPLRMLRAAR.

Belongs to the tRNA nucleotidyltransferase/poly(A) polymerase family. Requires Mg(2+) as cofactor.

The catalysed reaction is a tRNA precursor + 2 CTP = a tRNA with a 3' CC end + 2 diphosphate. In terms of biological role, tRNA nucleotidyltransferase involved in the synthesis of the tRNA CCA terminus. Adds the two cytidine residues to tRNA. This is CC-adding tRNA nucleotidyltransferase from Shouchella clausii (strain KSM-K16) (Alkalihalobacillus clausii).